A 140-amino-acid polypeptide reads, in one-letter code: Small ribosomal subunit protein uS12m (140 aa).

The protein belongs to the universal ribosomal protein uS12 family.

It is found in the mitochondrion. This Dictyostelium citrinum (Slime mold) protein is Small ribosomal subunit protein uS12m (mrps12).